A 306-amino-acid chain; its full sequence is MGGARDVGWVAAGLVLGAGACYCIYRLTRGPRRGGRRLRPSRSAEDLTEGSYDAILSAEQLEKLLYLLESTDDPIITEKALVTLGNNAAFSTNQAIIRELGGIPIVGSKINSLNQSIKEKALNALNNLSVNVENQTKIKIYVRQVCEDVFADPLNSAVQLAALRLLTNMTVTNDYQHLLSNYITGLLHLLLIGNGSTKVQVLKLLLNLSENPAMTEGLLSAQVDSSFLSLYDGQMANEILLRALTLFQNINNCLRVEGRLANQLPFAKGSLFFLLYGEECAQKMKALACHPDVDVKEKALAIKPKF.

Residues Val-7–Arg-29 traverse the membrane as a helical segment. Ser-43 is modified (phosphoserine). Thr-48 is modified (phosphothreonine). The ARM repeat unit spans residues Gly-101 to Arg-143.

As to quaternary structure, interacts with the DNA-binding domain of p53/TP53.

It localises to the endoplasmic reticulum membrane. The protein localises to the mitochondrion outer membrane. May play a role in cell survival and cell growth. May suppress the transcriptional activity of p53/TP53. The protein is Armadillo repeat-containing protein 10 (Armc10) of Rattus norvegicus (Rat).